The chain runs to 336 residues: DNA-directed RNA polymerase subunit alpha (336 aa).

Residues 1–238 (MNDLDLNLVP…NLFLPFLQAE (238 aa)) are alpha N-terminal domain (alpha-NTD). The tract at residues 267–336 (AKKVTFQHIF…LQKRFGMRLQ (70 aa)) is alpha C-terminal domain (alpha-CTD).

It belongs to the RNA polymerase alpha chain family. As to quaternary structure, in plastids the minimal PEP RNA polymerase catalytic core is composed of four subunits: alpha, beta, beta', and beta''. When a (nuclear-encoded) sigma factor is associated with the core the holoenzyme is formed, which can initiate transcription.

The protein resides in the plastid. It is found in the chloroplast. It carries out the reaction RNA(n) + a ribonucleoside 5'-triphosphate = RNA(n+1) + diphosphate. Its function is as follows. DNA-dependent RNA polymerase catalyzes the transcription of DNA into RNA using the four ribonucleoside triphosphates as substrates. This Huperzia lucidula (Shining clubmoss) protein is DNA-directed RNA polymerase subunit alpha.